Consider the following 526-residue polypeptide: Lysine--tRNA ligase (526 aa).

Residues Glu431 and Glu438 each coordinate Mg(2+).

It belongs to the class-II aminoacyl-tRNA synthetase family. Homodimer. It depends on Mg(2+) as a cofactor.

Its subcellular location is the cytoplasm. It catalyses the reaction tRNA(Lys) + L-lysine + ATP = L-lysyl-tRNA(Lys) + AMP + diphosphate. The protein is Lysine--tRNA ligase (lysS) of Chlamydia trachomatis serovar D (strain ATCC VR-885 / DSM 19411 / UW-3/Cx).